Reading from the N-terminus, the 332-residue chain is DNA repair and recombination protein RadA (332 aa).

126 to 133 (GEFGSGKT) contacts ATP.

Belongs to the eukaryotic RecA-like protein family.

In terms of biological role, involved in DNA repair and in homologous recombination. Binds and assemble on single-stranded DNA to form a nucleoprotein filament. Hydrolyzes ATP in a ssDNA-dependent manner and promotes DNA strand exchange between homologous DNA molecules. The sequence is that of DNA repair and recombination protein RadA from Pyrobaculum calidifontis (strain DSM 21063 / JCM 11548 / VA1).